Reading from the N-terminus, the 396-residue chain is NADH-quinone oxidoreductase subunit D (396 aa).

The protein belongs to the complex I 49 kDa subunit family. NDH-1 is composed of 14 different subunits. Subunits NuoB, C, D, E, F, and G constitute the peripheral sector of the complex.

The protein localises to the cell inner membrane. The enzyme catalyses a quinone + NADH + 5 H(+)(in) = a quinol + NAD(+) + 4 H(+)(out). Its function is as follows. NDH-1 shuttles electrons from NADH, via FMN and iron-sulfur (Fe-S) centers, to quinones in the respiratory chain. The immediate electron acceptor for the enzyme in this species is believed to be ubiquinone. Couples the redox reaction to proton translocation (for every two electrons transferred, four hydrogen ions are translocated across the cytoplasmic membrane), and thus conserves the redox energy in a proton gradient. In Bartonella henselae (strain ATCC 49882 / DSM 28221 / CCUG 30454 / Houston 1) (Rochalimaea henselae), this protein is NADH-quinone oxidoreductase subunit D.